A 295-amino-acid polypeptide reads, in one-letter code: 4-diphosphocytidyl-2-C-methyl-D-erythritol kinase (295 aa).

Lysine 22 is a catalytic residue. 106–116 contacts ATP; the sequence is PAGGGFGGGSS. Aspartate 148 is an active-site residue.

This sequence belongs to the GHMP kinase family. IspE subfamily.

The catalysed reaction is 4-CDP-2-C-methyl-D-erythritol + ATP = 4-CDP-2-C-methyl-D-erythritol 2-phosphate + ADP + H(+). The protein operates within isoprenoid biosynthesis; isopentenyl diphosphate biosynthesis via DXP pathway; isopentenyl diphosphate from 1-deoxy-D-xylulose 5-phosphate: step 3/6. In terms of biological role, catalyzes the phosphorylation of the position 2 hydroxy group of 4-diphosphocytidyl-2C-methyl-D-erythritol. The chain is 4-diphosphocytidyl-2-C-methyl-D-erythritol kinase from Xanthomonas oryzae pv. oryzae (strain MAFF 311018).